Here is a 436-residue protein sequence, read N- to C-terminus: Mitochondrial distribution and morphology protein 12 (436 aa).

Residues 1 to 436 (MSIEVNWGTA…VFPSFYTFLI (436 aa)) enclose the SMP-LTD domain. Over residues 73 to 84 (DEDGDSGSEISE) the composition is skewed to acidic residues. Disordered regions lie at residues 73–98 (DEDGDSGSEISEELQHRTHDNPWDRT), 184–275 (AVAG…RMRE), and 352–380 (GSGSYSGQQETPGPSTGSSGGGNPSPHQK). Residues 85-98 (ELQHRTHDNPWDRT) are compositionally biased toward basic and acidic residues. 2 stretches are compositionally biased toward polar residues: residues 190–206 (PFTTNWTDPSPMGQGNK) and 222–243 (DSSNPASRPSTASTHPSGSNRS). Residues 244-255 (SHPDGHPEHNDD) show a composition bias toward basic and acidic residues. Positions 256–267 (PISSSENPLLQN) are enriched in polar residues.

The protein belongs to the MDM12 family. In terms of assembly, component of the ER-mitochondria encounter structure (ERMES) or MDM complex, composed of mmm1, mdm10, mdm12 and mdm34. A mmm1 homodimer associates with one molecule of mdm12 on each side in a pairwise head-to-tail manner, and the SMP-LTD domains of mmm1 and mdm12 generate a continuous hydrophobic tunnel for phospholipid trafficking.

It is found in the mitochondrion outer membrane. The protein resides in the endoplasmic reticulum membrane. In terms of biological role, component of the ERMES/MDM complex, which serves as a molecular tether to connect the endoplasmic reticulum (ER) and mitochondria. Components of this complex are involved in the control of mitochondrial shape and protein biogenesis, and function in nonvesicular lipid trafficking between the ER and mitochondria. Mdm12 is required for the interaction of the ER-resident membrane protein mmm1 and the outer mitochondrial membrane-resident beta-barrel protein mdm10. The mdm12-mmm1 subcomplex functions in the major beta-barrel assembly pathway that is responsible for biogenesis of all mitochondrial outer membrane beta-barrel proteins, and acts in a late step after the SAM complex. The mdm10-mdm12-mmm1 subcomplex further acts in the TOM40-specific pathway after the action of the mdm12-mmm1 complex. Essential for establishing and maintaining the structure of mitochondria and maintenance of mtDNA nucleoids. This is Mitochondrial distribution and morphology protein 12 from Emericella nidulans (strain FGSC A4 / ATCC 38163 / CBS 112.46 / NRRL 194 / M139) (Aspergillus nidulans).